The primary structure comprises 164 residues: Putative 4-hydroxy-4-methyl-2-oxoglutarate aldolase (164 aa).

Substrate is bound by residues 75-78 (GDLI) and Arg-97. Asp-98 contributes to the a divalent metal cation binding site.

Belongs to the class II aldolase/RraA-like family. In terms of assembly, homotrimer. It depends on a divalent metal cation as a cofactor.

It catalyses the reaction 4-hydroxy-4-methyl-2-oxoglutarate = 2 pyruvate. The catalysed reaction is oxaloacetate + H(+) = pyruvate + CO2. Catalyzes the aldol cleavage of 4-hydroxy-4-methyl-2-oxoglutarate (HMG) into 2 molecules of pyruvate. Also contains a secondary oxaloacetate (OAA) decarboxylase activity due to the common pyruvate enolate transition state formed following C-C bond cleavage in the retro-aldol and decarboxylation reactions. The chain is Putative 4-hydroxy-4-methyl-2-oxoglutarate aldolase from Shewanella oneidensis (strain ATCC 700550 / JCM 31522 / CIP 106686 / LMG 19005 / NCIMB 14063 / MR-1).